Reading from the N-terminus, the 183-residue chain is UPF0725 protein At4g11700 (183 aa).

It belongs to the UPF0725 (EMB2204) family.

In Arabidopsis thaliana (Mouse-ear cress), this protein is UPF0725 protein At4g11700.